We begin with the raw amino-acid sequence, 71 residues long: Conotoxin Bu25 (71 aa).

Residues 1-21 (MGMRMMVTVFPLVVLATTVVS) form the signal peptide. The propeptide occupies 22-44 (LRSNRASDGRRGIVNKLNDLVPK). Arg-70 is subject to Arginine amide.

This sequence belongs to the conotoxin A superfamily. In terms of processing, contains 3 disulfide bonds. They are not indicated here, since framework IV presents two different connectivities (I-V, II-III, IV-VI and I-III, II-V, IV-VI). In terms of tissue distribution, expressed by the venom duct.

The protein resides in the secreted. This is Conotoxin Bu25 from Conus bullatus (Bubble cone).